The following is a 429-amino-acid chain: 3-phosphoshikimate 1-carboxyvinyltransferase (429 aa).

3-phosphoshikimate-binding residues include Lys-11, Ser-12, and Arg-16. A phosphoenolpyruvate-binding site is contributed by Lys-11. Phosphoenolpyruvate-binding residues include Gly-82 and Arg-110. Residues Ser-155, Gln-157, Asp-302, and Lys-329 each coordinate 3-phosphoshikimate. Phosphoenolpyruvate is bound at residue Gln-157. Asp-302 serves as the catalytic Proton acceptor. 2 residues coordinate phosphoenolpyruvate: Arg-333 and Arg-385.

Belongs to the EPSP synthase family. In terms of assembly, monomer.

The protein resides in the cytoplasm. It catalyses the reaction 3-phosphoshikimate + phosphoenolpyruvate = 5-O-(1-carboxyvinyl)-3-phosphoshikimate + phosphate. It functions in the pathway metabolic intermediate biosynthesis; chorismate biosynthesis; chorismate from D-erythrose 4-phosphate and phosphoenolpyruvate: step 6/7. Functionally, catalyzes the transfer of the enolpyruvyl moiety of phosphoenolpyruvate (PEP) to the 5-hydroxyl of shikimate-3-phosphate (S3P) to produce enolpyruvyl shikimate-3-phosphate and inorganic phosphate. The protein is 3-phosphoshikimate 1-carboxyvinyltransferase of Helicobacter pylori (strain Shi470).